A 108-amino-acid polypeptide reads, in one-letter code: FK506-binding protein 1 (108 aa).

The PPIase FKBP-type domain maps to 20 to 108; the sequence is GDNVTIHYVG…KFEVELLKVN (89 aa).

Belongs to the FKBP-type PPIase family. FKBP1 subfamily.

Its subcellular location is the cytoplasm. The enzyme catalyses [protein]-peptidylproline (omega=180) = [protein]-peptidylproline (omega=0). Inhibited by both FK506 and rapamycin. PPIases accelerate the folding of proteins. It catalyzes the cis-trans isomerization of proline imidic peptide bonds in oligopeptides. The polypeptide is FK506-binding protein 1 (FRR1) (Cryptococcus neoformans var. grubii serotype A (strain H99 / ATCC 208821 / CBS 10515 / FGSC 9487) (Filobasidiella neoformans var. grubii)).